The following is a 141-amino-acid chain: ATP synthase epsilon chain, chloroplastic (141 aa).

The protein belongs to the ATPase epsilon chain family. In terms of assembly, F-type ATPases have 2 components, F(1) - the catalytic core - and F(0) - the membrane proton channel. F(1) has five subunits: alpha(3), beta(3), gamma(1), delta(1), epsilon(1). F(0) has four main subunits: a(1), b(1), b'(1) and c(10-14). The alpha and beta chains form an alternating ring which encloses part of the gamma chain. F(1) is attached to F(0) by a central stalk formed by the gamma and epsilon chains, while a peripheral stalk is formed by the delta, b and b' chains.

Its subcellular location is the plastid. It localises to the chloroplast thylakoid membrane. In terms of biological role, f(1)F(0) ATP synthase produces ATP from ADP in the presence of a proton or sodium gradient. F-type ATPases consist of two structural domains, F(1) containing the extramembraneous catalytic core and F(0) containing the membrane proton channel, linked together by a central stalk and a peripheral stalk. During catalysis, ATP synthesis in the catalytic domain of F(1) is coupled via a rotary mechanism of the central stalk subunits to proton translocation. This is ATP synthase epsilon chain, chloroplastic from Chlamydomonas reinhardtii (Chlamydomonas smithii).